Consider the following 648-residue polypeptide: MATGIASGCGQLHLRKPVYLRNSYGNKAHCHSNVILNGTQNQIAWSSWVSNVLRVNRSSYPECQVIKTNWKSSRGTIKSCQQRDGSVTRYFDFTVIGSGIAGLRYALEVAKHGTVAVITKAEPHESSTNYAQGGVSAVLCPLDSVESHMQDTIVAGAYLCDKETVRVVCTEGPERIRELIAMGASFDHGEDGNLDLAREGGHSHRRIVHAADMTGREIERALLEAVFKNPNIHVFQHHFAIDLLTTQDGSDIVCHGVDTIHTETKEVIRFISKVTLLASGGVGHIYPSTTNPTVATGDGMAMAHRAQAVISNMEFVQFHPTALADEGLPNIPSARENAFLITEAVRGDGGILYNLDMERFMPMYDERAELAPRDVVARSIDDQLKKRGEKYVLLDISHKPREKVLSHFPNIAAECLRHGLDITQQPIPVVPAAHYMCGGVRAGLEGETNVQGLYVAGEVACTGLHGANRLASNSLLEALVFARRAVQPSIDHVNVSRIDHGASSWWPRPVAPMVLGDTVLNKVICRTREVRKELQSIMWEYVGIVRSNSRLNTAEKRIRELELEWETYLFQHGWEPTMVGVEACEMRNLFCCANLVVSSALSRHESRGLHYTTDFPHVEESERLPTVIFPSQRNNSWSSRQLHAQPIS.

FAD is bound by residues 98 to 101 (SGIA), K120, 127 to 134 (STNYAQGG), and D298. Residue R373 is the Proton donor/acceptor of the active site. Residues E458 and 474 to 475 (SL) contribute to the FAD site.

It belongs to the FAD-dependent oxidoreductase 2 family. NadB subfamily. FAD is required as a cofactor.

Its subcellular location is the plastid. It is found in the chloroplast. The enzyme catalyses L-aspartate + O2 = iminosuccinate + H2O2. Its pathway is alkaloid biosynthesis; nicotine biosynthesis. It functions in the pathway cofactor biosynthesis; NAD(+) biosynthesis; iminoaspartate from L-aspartate (oxidase route): step 1/1. Functionally, involved in the biosynthesis of pyridine alkaloid natural products, leading mainly to the production of anabasine, anatabine, nicotine and nornicotine, effective deterrents against herbivores with antiparasitic and pesticide properties (neurotoxins); nornicotine serves as the precursor in the synthesis of the carcinogen compound N'-nitrosonornicotine (NNN). Catalyzes the oxidation of L-aspartate to iminoaspartate. The sequence is that of L-aspartate oxidase 2-b, chloroplastic from Nicotiana tabacum (Common tobacco).